A 433-amino-acid polypeptide reads, in one-letter code: 3-phosphoshikimate 1-carboxyvinyltransferase (433 aa).

The 3-phosphoshikimate site is built by K23, S24, and R28. K23 serves as a coordination point for phosphoenolpyruvate. Phosphoenolpyruvate is bound by residues G95 and R123. 3-phosphoshikimate-binding residues include S170, S171, Q172, S198, D317, and K344. Q172 contacts phosphoenolpyruvate. D317 acts as the Proton acceptor in catalysis. Phosphoenolpyruvate is bound by residues R348, R391, and K416.

This sequence belongs to the EPSP synthase family. In terms of assembly, monomer.

Its subcellular location is the cytoplasm. It carries out the reaction 3-phosphoshikimate + phosphoenolpyruvate = 5-O-(1-carboxyvinyl)-3-phosphoshikimate + phosphate. The protein operates within metabolic intermediate biosynthesis; chorismate biosynthesis; chorismate from D-erythrose 4-phosphate and phosphoenolpyruvate: step 6/7. Its function is as follows. Catalyzes the transfer of the enolpyruvyl moiety of phosphoenolpyruvate (PEP) to the 5-hydroxyl of shikimate-3-phosphate (S3P) to produce enolpyruvyl shikimate-3-phosphate and inorganic phosphate. In Neisseria gonorrhoeae (strain NCCP11945), this protein is 3-phosphoshikimate 1-carboxyvinyltransferase.